A 468-amino-acid chain; its full sequence is F-box/LRR-repeat protein At4g14096 (468 aa).

Positions 7–60 (RDIISSLPEAISCHILSFLPTKEAASTSVLSKKWRYLFAFVPNLDLDESVYLNP) constitute an F-box domain. LRR repeat units follow at residues 114-136 (VSDL…MFLS), 138-167 (TLVR…YIDS), 169-194 (YFEK…VLDD), 216-241 (STQV…KFTD), 292-323 (TLYL…TIES), and 324-349 (NPEV…IFQG).

The sequence is that of F-box/LRR-repeat protein At4g14096 from Arabidopsis thaliana (Mouse-ear cress).